The sequence spans 1244 residues: Ras-specific guanine nucleotide-releasing factor 2 (1244 aa).

The PH 1 domain maps to 22-129; sequence EGTKRGYLSK…WVEAIQQASY (108 aa). A coiled-coil region spans residues 147–189; sequence VQIVETEKVAANQLRTQLEDQDTEIERLKAEIIALNKTKERMR. Residues 201-230 form the IQ domain; that stretch reads DIKKIKKVQSFMRGWLCRRKWKIIVQDYIC. One can recognise a DH domain in the interval 239-425; the sequence is KRNQIVFNMV…EELSRVMHDE (187 aa). The PH 2 domain maps to 466-584; the sequence is PSVERGKLSK…WTSDISQCID (119 aa). The N-terminal Ras-GEF domain maps to 631–745; it reads KVPQIRYASV…PVRTRKLSLN (115 aa). 3 disordered regions span residues 704–743, 759–814, and 843–879; these read NRSG…RKLS, TTSS…NAEV, and PESP…AENS. A compositionally biased stretch (basic and acidic residues) spans 706 to 715; the sequence is SGDHVNDKSP. The span at 728–743 shows a compositional bias: polar residues; it reads SISSRTSSPVRTRKLS. 2 stretches are compositionally biased toward low complexity: residues 759-774 and 781-806; these read TTSS…ANPT and NNNN…QSPG. One can recognise a Ras-GEF domain in the interval 1009–1241; it reads SAMEIAEQIT…YDLSLKIEPR (233 aa).

The protein resides in the cytoplasm. The protein localises to the cell membrane. Its subcellular location is the endoplasmic reticulum membrane. In terms of biological role, functions as a calcium-regulated nucleotide exchange factor activating both Ras and rac1 through the exchange of bound GDP for GTP. May function in synaptic plasticity. This chain is Ras-specific guanine nucleotide-releasing factor 2 (rasgrf2), found in Danio rerio (Zebrafish).